The following is a 158-amino-acid chain: Molybdopterin synthase catalytic subunit (158 aa).

Substrate-binding positions include 107–108, lysine 123, and 130–132; these read HR and KKE.

This sequence belongs to the MoaE family. MOCS2B subfamily. Heterotetramer; composed of 2 small (mocs2s) and 2 large (mocs2l) subunits.

It is found in the cytoplasm. The catalysed reaction is 2 [molybdopterin-synthase sulfur-carrier protein]-C-terminal-Gly-aminoethanethioate + cyclic pyranopterin phosphate + H2O = molybdopterin + 2 [molybdopterin-synthase sulfur-carrier protein]-C-terminal Gly-Gly + 2 H(+). It functions in the pathway cofactor biosynthesis; molybdopterin biosynthesis. Its function is as follows. Catalytic subunit of the molybdopterin synthase complex, a complex that catalyzes the conversion of precursor Z into molybdopterin. Acts by mediating the incorporation of 2 sulfur atoms from thiocarboxylated mocs2s into precursor Z to generate a dithiolene group. The chain is Molybdopterin synthase catalytic subunit (mocs2l) from Dictyostelium discoideum (Social amoeba).